The chain runs to 209 residues: ATP phosphoribosyltransferase (209 aa).

It belongs to the ATP phosphoribosyltransferase family. Short subfamily. Heteromultimer composed of HisG and HisZ subunits.

Its subcellular location is the cytoplasm. The catalysed reaction is 1-(5-phospho-beta-D-ribosyl)-ATP + diphosphate = 5-phospho-alpha-D-ribose 1-diphosphate + ATP. The protein operates within amino-acid biosynthesis; L-histidine biosynthesis; L-histidine from 5-phospho-alpha-D-ribose 1-diphosphate: step 1/9. Functionally, catalyzes the condensation of ATP and 5-phosphoribose 1-diphosphate to form N'-(5'-phosphoribosyl)-ATP (PR-ATP). Has a crucial role in the pathway because the rate of histidine biosynthesis seems to be controlled primarily by regulation of HisG enzymatic activity. This chain is ATP phosphoribosyltransferase, found in Alkaliphilus metalliredigens (strain QYMF).